The chain runs to 168 residues: Photosystem I assembly protein Ycf3 (168 aa).

TPR repeat units lie at residues 35–68, 72–105, and 120–153; these read AFTY…EIDP, SYIL…NPFL, and GEQA…TPGN.

This sequence belongs to the Ycf3 family.

It is found in the plastid. The protein resides in the chloroplast thylakoid membrane. In terms of biological role, essential for the assembly of the photosystem I (PSI) complex. May act as a chaperone-like factor to guide the assembly of the PSI subunits. The sequence is that of Photosystem I assembly protein Ycf3 from Nicotiana sylvestris (Wood tobacco).